The chain runs to 139 residues: Small ribosomal subunit protein uS19 (139 aa).

Belongs to the universal ribosomal protein uS19 family.

In terms of biological role, protein S19 forms a complex with S13 that binds strongly to the 16S ribosomal RNA. This Methanoregula boonei (strain DSM 21154 / JCM 14090 / 6A8) protein is Small ribosomal subunit protein uS19.